The primary structure comprises 91 residues: MSQLAHNLTLSIFEPLRTTGTIVCTIGPSTQSVEALKGLIKSGMSVARMNFSHGSHEYHQTTINNVRQAAAELGVNIAIALDTKGPEIRTG.

Arginine 48 contacts substrate. Asparagine 50, serine 52, aspartate 82, and threonine 83 together coordinate K(+). ATP is bound at residue 50–53 (NFSH). Arginine 89 is an ATP binding site.

The protein belongs to the pyruvate kinase family. Homotetramer. It depends on Mg(2+) as a cofactor. The cofactor is K(+).

The enzyme catalyses pyruvate + ATP = phosphoenolpyruvate + ADP + H(+). Its pathway is carbohydrate degradation; glycolysis; pyruvate from D-glyceraldehyde 3-phosphate: step 5/5. This chain is Pyruvate kinase, found in Leishmania braziliensis.